We begin with the raw amino-acid sequence, 360 residues long: Probable mannan endo-1,4-beta-mannosidase A (360 aa).

The first 18 residues, 1 to 18, serve as a signal peptide directing secretion; sequence MKLSQILTFASLLSGALA. Asn-142 and Asn-178 together coordinate substrate. Glu-179 acts as the Proton donor in catalysis. Residue Tyr-254 participates in substrate binding. Glu-287 (nucleophile) is an active-site residue. An N-linked (GlcNAc...) asparagine glycan is attached at Asn-307. Trp-317 provides a ligand contact to substrate.

The protein belongs to the glycosyl hydrolase 5 (cellulase A) family.

Its subcellular location is the secreted. The enzyme catalyses Random hydrolysis of (1-&gt;4)-beta-D-mannosidic linkages in mannans, galactomannans and glucomannans.. Its function is as follows. Endo-1,4-mannanase, a crucial enzyme for depolymerization of seed galactomannans and wood galactoglucomannans. This Aspergillus clavatus (strain ATCC 1007 / CBS 513.65 / DSM 816 / NCTC 3887 / NRRL 1 / QM 1276 / 107) protein is Probable mannan endo-1,4-beta-mannosidase A (manA).